The sequence spans 312 residues: Pre-mRNA-splicing factor 38A (312 aa).

An N-terminal protein interaction domain region spans residues 1-179 (MANRTVKDAH…VLEETEQLDP (179 aa)). The segment at 180–312 (RVSALEEDMD…SHKKSRRGNE (133 aa)) is disordered. Acidic residues predominate over residues 184–201 (LEEDMDDVESSEEEEDDD). Over residues 202–223 (EKGRDPSPEHHRRNYRDLDRPR) the composition is skewed to basic and acidic residues. 2 stretches are compositionally biased toward basic residues: residues 224–294 (RSPS…RSHS) and 301–312 (KKSHKKSRRGNE).

It belongs to the PRP38 family. Component of the spliceosome B complex.

The protein resides in the nucleus. Functionally, involved in pre-mRNA splicing as a component of the spliceosome. The sequence is that of Pre-mRNA-splicing factor 38A (prpf38a) from Xenopus laevis (African clawed frog).